The following is a 950-amino-acid chain: Double-stranded RNA-binding protein Staufen homolog (950 aa).

3 disordered regions span residues 25 to 168 (VSGA…QQQQ), 202 to 274 (QQQL…QPST), and 288 to 342 (VTPV…NTKE). The segment covering 31-43 (QQRSMMSQQRGGS) has biased composition (low complexity). Positions 45 to 66 (AINSSKSPYQLQTSSISQFSHL) are enriched in polar residues. The segment covering 67-77 (QQQQQQQQQQQ) has biased composition (low complexity). Positions 78–122 (LVNNYHKQKQMSPDITSHQFSSSTGGGMPTQNGNYQSMSGSSIHT) are enriched in polar residues. 3 stretches are compositionally biased toward low complexity: residues 130 to 143 (QLSLQHQHHQYSSQ), 153 to 168 (QQHHYQSQQMTQQQQQ), and 202 to 253 (QQQL…ILQH). Polar residues predominate over residues 254 to 274 (SPTSGKSLSSAPHGTSVQPST). Residues 313-322 (SGRDSVHVSD) show a composition bias toward basic and acidic residues. DRBM domains lie at 344–411 (TPMC…ETKC), 435–546 (TPTV…ILKN), 578–645 (SEIS…ELRK), and 690–758 (NPIS…LLGY). 2 disordered regions span residues 758-833 (YTKP…HTAS) and 922-950 (DIHPGGDGPQVKKDVLARSGSGMKKDFSK). The span at 765-782 (PTKSSFKNPSTGEAGQTN) shows a compositional bias: polar residues. Residues 922–937 (DIHPGGDGPQVKKDVL) show a composition bias toward basic and acidic residues.

As to expression, strongly expressed in nervous tissue (at protein level).

It is found in the perikaryon. Its subcellular location is the cell projection. In terms of biological role, RNA-binding protein which is required for syntaxin location in sensory neurons during long-term synaptic facilitation. Binds to syntaxin mRNA and is required to maintain its accumulation at the axon hillock following neuronal stimulation and at the opposite pole in stable unstimulated sensory neurons. The polypeptide is Double-stranded RNA-binding protein Staufen homolog (Aplysia californica (California sea hare)).